Here is a 272-residue protein sequence, read N- to C-terminus: RELT-like protein 1 (272 aa).

Residues 1-23 (MALWGLPGSAVLAASVFVGGAVS) form the signal peptide. Over 24–58 (SPLVAADNTGSHTLHSRAETTPSSPTNNPGNGHPE) the chain is Extracellular. The interval 33–52 (GSHTLHSRAETTPSSPTNNP) is disordered. The chain crosses the membrane as a helical span at residues 59-79 (YIAYVLVPVFFVMGLLGVLIC). Over 80–272 (HLLKKKGYRC…PVKRERSDTE (193 aa)) the chain is Cytoplasmic. Residues 90-114 (TTEAEQEVEEEKVEKIELNDSINEN) are a coiled coil. Phosphoserine occurs at positions 110 and 115. Disordered regions lie at residues 146 to 171 (DIESPVTPSTPGSPPVSPGPLSPGAT) and 235 to 272 (EHKSNQKERRSLMSVSGIESVNGDVPATPVKRERSDTE). A compositionally biased stretch (pro residues) spans 156 to 166 (PGSPPVSPGPL). Basic and acidic residues predominate over residues 235-245 (EHKSNQKERRS). Ser245 and Ser248 each carry phosphoserine.

The protein belongs to the RELT family. Interacts with RELT, RELL2, OXSR1 and PLSCR1.

It localises to the cell membrane. Functionally, induces activation of MAPK14/p38 cascade, when overexpressed. Induces apoptosis, when overexpressed. The polypeptide is RELT-like protein 1 (Rell1) (Mus musculus (Mouse)).